A 373-amino-acid chain; its full sequence is MPGWSCLVTGAGGFLGQRIVRMLVQEEELQEIRALFRTFGRKHEEELSKLQTKAKVRVLKGDILDAQCLKRACQGMSAVIHTAAAIDPLGAASRQTILDVNLKGTQLLLDACVEASVPTFIYSSSVLVAGPNSYKEIILNAHEEEHRESTWPNPYPYSKRMAEKAVLATNGRLLKNGGTLHTCALRLPFIYGEECQVTSTTVKTALKNNSIIKKNATFSIANPVYVGNAAWAHILAARSLQDPKKSPSIQGQFYYISDNTPHQSYDDLNYTLSKEWGLCLDSGWSLPLSLLYWLAFLLETVSFLLRPVYNYRPPFNRLLITVLNSVFTISYKKAQRDLGYQPLVSWEEAKQKTSEWIGTLVKQHRETLHKKSQ.

NADP(+)-binding positions include 10 to 15, Y155, and K159; that span reads GAGGFL. K159 acts as the Proton donor in catalysis. Residues 288-308 form a helical membrane-spanning segment; sequence LSLLYWLAFLLETVSFLLRPV. Residue K350 is modified to N6-acetyllysine.

It belongs to the 3-beta-HSD family. Expressed in the male liver, starting in late puberty.

It localises to the endoplasmic reticulum membrane. Its subcellular location is the mitochondrion membrane. It carries out the reaction a 3beta-hydroxysteroid + NADP(+) = a 3-oxosteroid + NADPH + H(+). The enzyme catalyses 5alpha-androstane-3beta,17beta-diol + NADP(+) = 17beta-hydroxy-5alpha-androstan-3-one + NADPH + H(+). It participates in steroid metabolism. In terms of biological role, responsible for the reduction of the oxo group on the C-3 of 5alpha-androstane steroids. Catalyzes the conversion of dihydrotestosterone to its inactive form 5alpha-androstanediol, that does not bind androgen receptor/AR. Does not function as an isomerase. This Mus musculus (Mouse) protein is NADPH-dependent 3-keto-steroid reductase Hsd3b5.